The primary structure comprises 27 residues: Small integral membrane protein 43 (27 aa).

The important for interaction with SLC2A1 and SLC2A3 stretch occupies residues 15 to 21 (HREPWGF).

Interacts with glucose transporters SLC2A1/GLUT1 and SLC2A3/GLUT3; the interactions may promote SLC2A1- and SLC2A3-mediated glucose transport to meet the energy needs of mesendoderm differentiation.

The protein resides in the cell membrane. Its function is as follows. Required for mesendoderm differentiation. Interacts with glucose transporters and promotes glucose uptake. Probably augments the glucose uptake capacity of glucose transporter proteins to meet the energy needs of mesendoderm differentiation. The sequence is that of Small integral membrane protein 43 from Pongo abelii (Sumatran orangutan).